The chain runs to 415 residues: Gamma-glutamyl phosphate reductase (415 aa).

The protein belongs to the gamma-glutamyl phosphate reductase family.

It localises to the cytoplasm. The catalysed reaction is L-glutamate 5-semialdehyde + phosphate + NADP(+) = L-glutamyl 5-phosphate + NADPH + H(+). It participates in amino-acid biosynthesis; L-proline biosynthesis; L-glutamate 5-semialdehyde from L-glutamate: step 2/2. Its function is as follows. Catalyzes the NADPH-dependent reduction of L-glutamate 5-phosphate into L-glutamate 5-semialdehyde and phosphate. The product spontaneously undergoes cyclization to form 1-pyrroline-5-carboxylate. The chain is Gamma-glutamyl phosphate reductase from Leuconostoc citreum (strain KM20).